The chain runs to 494 residues: DBIRD complex subunit ZNF326 (494 aa).

3 disordered regions span residues 1 to 22 (MDRE…QSFS), 147 to 170 (AFGG…RGQM), and 202 to 264 (KMAP…NSEK). Over residues 7-22 (SYNQRSVNSYGNQSFS) the composition is skewed to polar residues. The short motif at 200–221 (KRKMAPPFKPVGFFGKKQKLSK) is the Bipartite nuclear localization signal element. C2H2 AKAP95-type zinc fingers lie at residues 273 to 295 (CSFC…SATH) and 365 to 388 (CSAC…SADH). The segment at 429 to 494 (PFETQPDEQQ…CDPLTTTDEV (66 aa)) is disordered. The segment covering 433-451 (QPDEQQQEQEEEEEEEEQQ) has biased composition (acidic residues).

This sequence belongs to the AKAP95 family. In terms of assembly, component of the DBIRD complex.

The protein resides in the nucleus. Its function is as follows. Core component of the DBIRD complex, a multiprotein complex that acts at the interface between core mRNP particles and RNA polymerase II (RNAPII) and integrates transcript elongation with the regulation of alternative splicing. This chain is DBIRD complex subunit ZNF326 (znf326), found in Xenopus laevis (African clawed frog).